The sequence spans 880 residues: Leucine--tRNA ligase (880 aa).

Positions 46–56 match the 'HIGH' region motif; it reads PYPSGALHMGH. The tract at residues 483–502 is disordered; that stretch reads SPIKTEPTWRQTTCPDCGGP. The short motif at 638–642 is the 'KMSKS' region element; it reads KMSKS. Residue K641 participates in ATP binding.

This sequence belongs to the class-I aminoacyl-tRNA synthetase family.

It is found in the cytoplasm. It carries out the reaction tRNA(Leu) + L-leucine + ATP = L-leucyl-tRNA(Leu) + AMP + diphosphate. The polypeptide is Leucine--tRNA ligase (Xanthomonas oryzae pv. oryzae (strain PXO99A)).